The sequence spans 721 residues: Peroxisomal fatty acid beta-oxidation multifunctional protein AIM1 (721 aa).

Glu-116 functions as the Nucleophile in the catalytic mechanism. The active-site Proton acceptor is the Glu-136. The short motif at 719–721 (SKL) is the Microbody targeting signal element.

In the N-terminal section; belongs to the enoyl-CoA hydratase/isomerase family. This sequence in the central section; belongs to the 3-hydroxyacyl-CoA dehydrogenase family. Widely expressed.

The protein resides in the peroxisome. The enzyme catalyses a (3S)-3-hydroxyacyl-CoA = a (2E)-enoyl-CoA + H2O. It carries out the reaction a 4-saturated-(3S)-3-hydroxyacyl-CoA = a (3E)-enoyl-CoA + H2O. It catalyses the reaction (3S)-3-hydroxybutanoyl-CoA = (2E)-butenoyl-CoA + H2O. The catalysed reaction is (3S)-hydroxyoctanoyl-CoA = (2E)-octenoyl-CoA + H2O. The enzyme catalyses (3S)-3-hydroxydodecanoyl-CoA = (2E)-dodecenoyl-CoA + H2O. It carries out the reaction (3S)-hydroxytetradecanoyl-CoA = (2E)-tetradecenoyl-CoA + H2O. It catalyses the reaction (3S)-hydroxyhexanoyl-CoA = (2E)-hexenoyl-CoA + H2O. The catalysed reaction is a (3Z)-enoyl-CoA = a 4-saturated (2E)-enoyl-CoA. The enzyme catalyses a (3E)-enoyl-CoA = a 4-saturated (2E)-enoyl-CoA. It carries out the reaction (3S)-3-hydroxybutanoyl-CoA = (3R)-3-hydroxybutanoyl-CoA. It catalyses the reaction a (3S)-3-hydroxyacyl-CoA + NAD(+) = a 3-oxoacyl-CoA + NADH + H(+). The catalysed reaction is (3S)-3-hydroxybutanoyl-CoA + NAD(+) = acetoacetyl-CoA + NADH + H(+). The enzyme catalyses (3S)-hydroxyhexanoyl-CoA + NAD(+) = 3-oxohexanoyl-CoA + NADH + H(+). It carries out the reaction (3S)-hydroxyoctanoyl-CoA + NAD(+) = 3-oxooctanoyl-CoA + NADH + H(+). It catalyses the reaction (3S)-3-hydroxydodecanoyl-CoA + NAD(+) = 3-oxododecanoyl-CoA + NADH + H(+). The catalysed reaction is (3S)-hydroxytetradecanoyl-CoA + NAD(+) = 3-oxotetradecanoyl-CoA + NADH + H(+). It participates in lipid metabolism; fatty acid beta-oxidation. In terms of biological role, involved in peroxisomal fatty acid beta-oxidation. Required for wound-induced jasmonate biosynthesis. Possesses enoyl-CoA hydratase activity against short chain substrates (C4-C6) and 3-hydroxyacyl-CoA dehydrogenase activity against chains of variable sizes (C6-C16). Possesses cinnamoyl-CoA hydratase activity and is involved in the peroxisomal beta-oxidation pathway for the biosynthesis of benzoic acid (BA). Required for the accumulation in seeds of benzoylated glucosinolates (BGs) and substituted hydroxybenzoylated choline esters, which are BA-containing secondary metabolites. Required for salicylic acid (SA) in seeds. The protein is Peroxisomal fatty acid beta-oxidation multifunctional protein AIM1 (AIM1) of Arabidopsis thaliana (Mouse-ear cress).